The chain runs to 1226 residues: Methionine synthase (1226 aa).

The Hcy-binding domain occupies 7–327 (KVQIEKQLSE…EHIRQMALVV (321 aa)). Residues Cys-249, Cys-312, and Cys-313 each coordinate Zn(2+). The 262-residue stretch at 358–619 (FINVGERTNV…VPEDLREAVE (262 aa)) folds into the Pterin-binding domain. One can recognise a B12-binding N-terminal domain in the interval 652–746 (SALEWRDWPV…FINASKEVGA (95 aa)). Methylcob(III)alamin contacts are provided by residues Glu-696, 758–762 (GDVHD), His-761, Ser-806, Thr-810, and Ala-862. The B12-binding domain maps to 748-883 (NGKILLATVK…SNELKPSFVE (136 aa)). Residues 899 to 1226 (KQPRTKPVTL…AEKWLGPNLN (328 aa)) enclose the AdoMet activation domain. Residues Asp-949, Arg-1137, and 1192–1193 (YF) each bind S-adenosyl-L-methionine.

The protein belongs to the vitamin-B12 dependent methionine synthase family. Requires methylcob(III)alamin as cofactor. It depends on Zn(2+) as a cofactor.

The enzyme catalyses (6S)-5-methyl-5,6,7,8-tetrahydrofolate + L-homocysteine = (6S)-5,6,7,8-tetrahydrofolate + L-methionine. It participates in amino-acid biosynthesis; L-methionine biosynthesis via de novo pathway; L-methionine from L-homocysteine (MetH route): step 1/1. In terms of biological role, catalyzes the transfer of a methyl group from methyl-cobalamin to homocysteine, yielding enzyme-bound cob(I)alamin and methionine. Subsequently, remethylates the cofactor using methyltetrahydrofolate. In Aliivibrio fischeri (Vibrio fischeri), this protein is Methionine synthase (metH).